An 85-amino-acid chain; its full sequence is ATP synthase subunit c (85 aa).

2 helical membrane passes run 19-39 and 62-82; these read LGAA…IGKI and IIAA…CLLV.

Belongs to the ATPase C chain family. F-type ATPases have 2 components, F(1) - the catalytic core - and F(0) - the membrane proton channel. F(1) has five subunits: alpha(3), beta(3), gamma(1), delta(1), epsilon(1). F(0) has three main subunits: a(1), b(2) and c(10-14). The alpha and beta chains form an alternating ring which encloses part of the gamma chain. F(1) is attached to F(0) by a central stalk formed by the gamma and epsilon chains, while a peripheral stalk is formed by the delta and b chains.

The protein localises to the cell inner membrane. F(1)F(0) ATP synthase produces ATP from ADP in the presence of a proton or sodium gradient. F-type ATPases consist of two structural domains, F(1) containing the extramembraneous catalytic core and F(0) containing the membrane proton channel, linked together by a central stalk and a peripheral stalk. During catalysis, ATP synthesis in the catalytic domain of F(1) is coupled via a rotary mechanism of the central stalk subunits to proton translocation. Its function is as follows. Key component of the F(0) channel; it plays a direct role in translocation across the membrane. A homomeric c-ring of between 10-14 subunits forms the central stalk rotor element with the F(1) delta and epsilon subunits. This Bacteroides fragilis (strain ATCC 25285 / DSM 2151 / CCUG 4856 / JCM 11019 / LMG 10263 / NCTC 9343 / Onslow / VPI 2553 / EN-2) protein is ATP synthase subunit c.